The chain runs to 211 residues: Thymidylate kinase (211 aa).

ATP is bound at residue 11-18; that stretch reads GPDGAGKT.

This sequence belongs to the thymidylate kinase family.

The catalysed reaction is dTMP + ATP = dTDP + ADP. In terms of biological role, phosphorylation of dTMP to form dTDP in both de novo and salvage pathways of dTTP synthesis. The chain is Thymidylate kinase from Streptococcus agalactiae serotype Ia (strain ATCC 27591 / A909 / CDC SS700).